The chain runs to 296 residues: Homoserine kinase (296 aa).

Position 92 to 102 (92 to 102 (PQSRGLGSSAA)) interacts with ATP.

It belongs to the GHMP kinase family. Homoserine kinase subfamily.

It localises to the cytoplasm. It catalyses the reaction L-homoserine + ATP = O-phospho-L-homoserine + ADP + H(+). Its pathway is amino-acid biosynthesis; L-threonine biosynthesis; L-threonine from L-aspartate: step 4/5. Functionally, catalyzes the ATP-dependent phosphorylation of L-homoserine to L-homoserine phosphate. The polypeptide is Homoserine kinase (Cutibacterium acnes (strain DSM 16379 / KPA171202) (Propionibacterium acnes)).